We begin with the raw amino-acid sequence, 293 residues long: MEQYILKLENSINILAFLGALVSSLFYWAKLTYYKQIQVFSLPKFCLIFSNCIIAGMLLERCFRYSYFPLSNLYESLLFLSWVLNIITIIFVDKLSIIGAIGSSAVTLIIGYANYILPPSLRQTSILAPALRSNWLMMHVSVMIFSYGLLIMGAFLSLIYVIVNNNLSQKSLNRMFYLPSFYVDFDKNEPRNDIGTATINRNKLSYETIESLSYKFISLGFISLTLGIISGSVWANEAWGNYWSWDPKETWALITWLVFATYLHIRINKKWNKIYASLVASLGLIVICFVTWE.

Helical transmembrane passes span 12–32, 39–59, 78–98, 99–119, 142–162, 216–236, 250–267, and 273–293; these read INILAFLGALVSSLFYWAKLT, VFSLPKFCLIFSNCIIAGMLL, LFLSWVLNIITIIFVDKLSII, GAIGSSAVTLIIGYANYILPP, VMIFSYGLLIMGAFLSLIYVI, FISLGFISLTLGIISGSVWAN, TWALITWLVFATYLHIRI, and KIYASLVASLGLIVICFVTWE.

The protein belongs to the CcmF/CycK/Ccl1/NrfE/CcsA family. In terms of assembly, may interact with Ccs1.

The protein localises to the plastid. The protein resides in the chloroplast thylakoid membrane. Its function is as follows. Required during biogenesis of c-type cytochromes (cytochrome c6 and cytochrome f) at the step of heme attachment. The protein is Cytochrome c biogenesis protein CcsA of Cyanidium caldarium (Red alga).